The chain runs to 398 residues: MSHKRPQSSAGESNGAVDLKTPRFDPVSLGLPAEFQLTDYTRLKGCSCKLPQPKLLALLQELSATPGQKDVGMDCSIVPLHHTNSKGEALFLVSTTDFFFPSVSDPFLQGQIGAANVLSDLYSMGIPDCDTMLMLLAASTEMDEHERLITTREIMKGFAERARLATTTVTGGQTVMNPWPLIGGVAMAVVSEAEMVRPTGLLCAGDILVLTKPLGCQVAVNLKQWLLRPSPLYEEAIAGHISPEEIEELYNMATDSMRRLNREGARLMRKHGAHGATDVTGFGILGHANNFGAAQAVGDAPRSLCLVLERLPMFKTAVAASKQMNDKYRLLEGYSAETSGGLLVAFPSTTAAAAFCAELTAVDGGCPSWIVGHVEDRATNAVDGVYARLKDGYEIVEV.

Residues Met-1 to Thr-21 form a disordered region. Cys-46 is an active-site residue. ATP contacts are provided by residues Lys-49, Gly-72–Asp-74, Asp-97, Asp-120, and Gly-171–Thr-174. Asp-74 is a binding site for Mg(2+). Asp-120 provides a ligand contact to Mg(2+). Asp-278 contributes to the Mg(2+) binding site.

Belongs to the selenophosphate synthase 1 family. Class I subfamily. Homodimer. It depends on Mg(2+) as a cofactor.

The catalysed reaction is hydrogenselenide + ATP + H2O = selenophosphate + AMP + phosphate + 2 H(+). Its function is as follows. Synthesizes selenophosphate from selenide and ATP. The polypeptide is Selenide, water dikinase (Leishmania major).